A 434-amino-acid chain; its full sequence is Beta-enolase (434 aa).

At alanine 2 the chain carries N-acetylalanine. Threonine 72 is subject to Phosphothreonine. Phosphoserine is present on residues serine 83 and serine 157. Substrate contacts are provided by histidine 158 and glutamate 167. Position 176 is a phosphoserine (serine 176). Residue threonine 205 is modified to Phosphothreonine. Residue glutamate 210 is the Proton donor of the active site. Threonine 229 carries the phosphothreonine modification. Tyrosine 236 is subject to Phosphotyrosine. Aspartate 245 contacts Mg(2+). Residue serine 263 is modified to Phosphoserine. 2 residues coordinate substrate: glutamate 293 and aspartate 318. 2 residues coordinate Mg(2+): glutamate 293 and aspartate 318. Residue lysine 343 is the Proton acceptor of the active site. Residues 370–373 (SHRS) and lysine 394 contribute to the substrate site.

Belongs to the enolase family. Mammalian enolase is composed of 3 isozyme subunits, alpha, beta and gamma, which can form homodimers or heterodimers which are cell-type and development-specific. Interacts with PNKD. It depends on Mg(2+) as a cofactor.

It is found in the cytoplasm. The enzyme catalyses (2R)-2-phosphoglycerate = phosphoenolpyruvate + H2O. It participates in carbohydrate degradation; glycolysis; pyruvate from D-glyceraldehyde 3-phosphate: step 4/5. In terms of biological role, glycolytic enzyme that catalyzes the conversion of 2-phosphoglycerate to phosphoenolpyruvate. Appears to have a function in striated muscle development and regeneration. The sequence is that of Beta-enolase (ENO3) from Bos taurus (Bovine).